Reading from the N-terminus, the 311-residue chain is Cytosolic Fe-S cluster assembly factor Nubp1 homolog (311 aa).

Residues Cys-9, Cys-23, Cys-26, and Cys-32 each coordinate [4Fe-4S] cluster. Residue 63-70 coordinates ATP; it reads GKGGVGKS. Cys-240 and Cys-243 together coordinate [4Fe-4S] cluster.

The protein belongs to the Mrp/NBP35 ATP-binding proteins family. NUBP1/NBP35 subfamily. As to quaternary structure, heterotetramer of 2 Nubp1 and 2 Nubp2 chains. It depends on [4Fe-4S] cluster as a cofactor.

Its subcellular location is the cytoplasm. Functionally, component of the cytosolic iron-sulfur (Fe/S) protein assembly (CIA) machinery. Required for maturation of extramitochondrial Fe-S proteins. The Nubp1-Nubp2 heterotetramer forms a Fe-S scaffold complex, mediating the de novo assembly of an Fe-S cluster and its transfer to target apoproteins. In Drosophila erecta (Fruit fly), this protein is Cytosolic Fe-S cluster assembly factor Nubp1 homolog.